Consider the following 222-residue polypeptide: Sugar fermentation stimulation protein homolog (222 aa).

It belongs to the SfsA family.

This Thermotoga sp. (strain RQ2) protein is Sugar fermentation stimulation protein homolog.